A 328-amino-acid polypeptide reads, in one-letter code: Protein FAM76B (328 aa).

A disordered region spans residues 143–232 (KEQRKGLGSS…ITQSMDSGGT (90 aa)). Residues 148–159 (GLGSSHSNSSSL) are compositionally biased toward low complexity. Residues 165-183 (QRHHHHHQHHRHGSSHHKI) show a composition bias toward basic residues. Positions 185–201 (GNLSPEQDQGLWKQSIQ) are enriched in polar residues. Ser-188 carries the phosphoserine modification. Basic and acidic residues predominate over residues 203–213 (ETPKKKPKLET). Over residues 216–232 (SNGDSSSITQSMDSGGT) the composition is skewed to polar residues. Residues 237-316 (LISQLKEEVM…KQVAALSKGK (80 aa)) adopt a coiled-coil conformation.

It belongs to the FAM76 family. As to expression, highly expressed in hematopoietic and immune systems including in the thymus, spleen, kidney, and blood vessel.

In terms of biological role, plays a role in hematopoiesis and immune system development, and participates in the inflammatory response. This is Protein FAM76B (fam76b) from Danio rerio (Zebrafish).